A 463-amino-acid polypeptide reads, in one-letter code: V-type proton ATPase subunit S1 (463 aa).

The N-terminal stretch at M1 to A32 is a signal peptide. Residues V33–R225 constitute a propeptide that is removed on maturation. At V33 to A412 the chain is on the lumenal side. N-linked (GlcNAc...) asparagine glycosylation is found at N164, N255, N267, N290, N297, N344, N351, and N399. A disulfide bridge links C365 with C411. Residues G413–F433 traverse the membrane as a helical segment. Residues T434–V463 are Cytoplasmic-facing.

The protein belongs to the vacuolar ATPase subunit S1 family. Accessory component of the multisubunit proton-transporting vacuolar (V)-ATPase protein pump. Interacts (via N-terminus) with ATP6AP2 (via N-terminus). Interacts with RNASEK. Interacts with TMEM106B (via C-terminus). Post-translationally, N-glycosylated. In terms of tissue distribution, expressed in brain cortex (at protein level). Highly expressed in islets of Langerhans. Expressed in pancreatic acini, pituitary gland, adrenal gland, lung, brain and bone marrow.

The protein resides in the endoplasmic reticulum membrane. Its subcellular location is the endoplasmic reticulum-Golgi intermediate compartment membrane. It is found in the cytoplasmic vesicle. It localises to the secretory vesicle. The protein localises to the synaptic vesicle membrane. The protein resides in the clathrin-coated vesicle membrane. Its function is as follows. Accessory subunit of the proton-transporting vacuolar (V)-ATPase protein pump, which is required for luminal acidification of secretory vesicles. Guides the V-type ATPase into specialized subcellular compartments, such as neuroendocrine regulated secretory vesicles or the ruffled border of the osteoclast, thereby regulating its activity. Involved in membrane trafficking and Ca(2+)-dependent membrane fusion. May play a role in the assembly of the V-type ATPase complex. In aerobic conditions, involved in intracellular iron homeostasis, thus triggering the activity of Fe(2+) prolyl hydroxylase (PHD) enzymes, and leading to HIF1A hydroxylation and subsequent proteasomal degradation. In islets of Langerhans cells, may regulate the acidification of dense-core secretory granules. The sequence is that of V-type proton ATPase subunit S1 (Atp6ap1) from Mus musculus (Mouse).